The sequence spans 140 residues: Cysteine desulfuration protein SufE (140 aa).

Cys-51 functions as the Cysteine persulfide intermediate in the catalytic mechanism.

This sequence belongs to the SufE family. Homodimer. Interacts with SufS.

Its subcellular location is the cytoplasm. The protein operates within cofactor biosynthesis; iron-sulfur cluster biosynthesis. In terms of biological role, participates in cysteine desulfuration mediated by SufS. Cysteine desulfuration mobilizes sulfur from L-cysteine to yield L-alanine and constitutes an essential step in sulfur metabolism for biosynthesis of a variety of sulfur-containing biomolecules. Functions as a sulfur acceptor for SufS, by mediating the direct transfer of the sulfur atom from the S-sulfanylcysteine of SufS, an intermediate product of cysteine desulfuration process. The polypeptide is Cysteine desulfuration protein SufE (Yersinia pseudotuberculosis serotype O:1b (strain IP 31758)).